The primary structure comprises 108 residues: Resistin (108 aa).

A signal peptide spans 1–18 (MKALCLLLLPVLGLLVSS). Intrachain disulfides connect cysteine 51-cysteine 104, cysteine 63-cysteine 103, cysteine 72-cysteine 89, cysteine 74-cysteine 91, and cysteine 78-cysteine 93.

Belongs to the resistin/FIZZ family. As to quaternary structure, homodimer; disulfide-linked. Interacts with DEFA1. Expressed in white adipose tissue (at protein level). Widely expressed, with particularly strong expression in lung, bone marrow, breast and peripheral blood. Expressed strongly in bone marrow and at lower levels in lung, but not detected in other tissues. Isoform 2 is detected in adipose tissue, bone marrow, brain, lung, peripheral blood, placenta and thymus.

The protein localises to the secreted. Its function is as follows. Hormone that seems to suppress insulin ability to stimulate glucose uptake into adipose cells. Potentially links obesity to diabetes. Promotes chemotaxis in myeloid cells. This is Resistin (RETN) from Homo sapiens (Human).